Consider the following 333-residue polypeptide: Prenyltransferase stbC (333 aa).

Helical transmembrane passes span valine 74 to alanine 94, alanine 125 to alanine 145, cysteine 147 to cysteine 164, valine 173 to proline 193, valine 201 to tyrosine 221, isoleucine 247 to valine 267, tyrosine 272 to isoleucine 292, and serine 304 to leucine 324.

It belongs to the UbiA prenyltransferase family.

The protein localises to the membrane. The enzyme catalyses orsellinate + (2E,6E)-farnesyl diphosphate = ilicicolinate B + diphosphate. Its pathway is secondary metabolite biosynthesis; terpenoid biosynthesis. In terms of biological role, prenyltransferase; part of the cluster that mediates the biosynthesis of LL-Z1272-beta, also known as ilicicolin B, a prenylated aryl-aldehyde produced by several fungi and that serves as a key pathway intermediate for many fungal meroterpenoids. The first step in the pathway is performed by the non-reducing polyketide synthase stbA that produces orsellinic acid by condensing acetyl-CoA with 3 malonyl-CoA units. The prenyltransferase stbC then prenylates orsenilic acid into grifolic acid. Finally, grifolic acid is reduced to ilicicolin B by the NRPS-like protein stbB. The protein is Prenyltransferase stbC of Stachybotrys bisbyi (Hyalostachybotrys bisbyi).